We begin with the raw amino-acid sequence, 346 residues long: Phosphoribosylformylglycinamidine cyclo-ligase (346 aa).

Belongs to the AIR synthase family.

Its subcellular location is the cytoplasm. The catalysed reaction is 2-formamido-N(1)-(5-O-phospho-beta-D-ribosyl)acetamidine + ATP = 5-amino-1-(5-phospho-beta-D-ribosyl)imidazole + ADP + phosphate + H(+). It participates in purine metabolism; IMP biosynthesis via de novo pathway; 5-amino-1-(5-phospho-D-ribosyl)imidazole from N(2)-formyl-N(1)-(5-phospho-D-ribosyl)glycinamide: step 2/2. The chain is Phosphoribosylformylglycinamidine cyclo-ligase from Vibrio parahaemolyticus serotype O3:K6 (strain RIMD 2210633).